The primary structure comprises 177 residues: ATP-dependent protease subunit HslV (177 aa).

Thr-6 is an active-site residue. Na(+) is bound by residues Ala-162, Cys-165, and Thr-168.

It belongs to the peptidase T1B family. HslV subfamily. A double ring-shaped homohexamer of HslV is capped on each side by a ring-shaped HslU homohexamer. The assembly of the HslU/HslV complex is dependent on binding of ATP.

It is found in the cytoplasm. It carries out the reaction ATP-dependent cleavage of peptide bonds with broad specificity.. With respect to regulation, allosterically activated by HslU binding. In terms of biological role, protease subunit of a proteasome-like degradation complex believed to be a general protein degrading machinery. This Desulfovibrio desulfuricans (strain ATCC 27774 / DSM 6949 / MB) protein is ATP-dependent protease subunit HslV.